Consider the following 117-residue polypeptide: Ig heavy chain V region RF (117 aa).

A signal peptide spans methionine 1 to cysteine 19. Residues aspartate 20–serine 49 form a framework-1 region. A disulfide bridge connects residues cysteine 41 and cysteine 115. Positions serine 50–serine 54 are complementarity-determining-1. Residues tryptophan 55–alanine 68 are framework-2. The segment at alanine 69–glycine 85 is complementarity-determining-2. Positions arginine 86 to arginine 117 are framework-3.

The chain is Ig heavy chain V region RF from Mus musculus (Mouse).